The chain runs to 98 residues: NADH-ubiquinone oxidoreductase chain 4L (98 aa).

The next 3 membrane-spanning stretches (helical) occupy residues 1–21 (MNLIDLILIAIYVIGISGLIF), 26–46 (IINILIISELNLGTLGMLFVL), and 61–81 (LYILTFTAAESAIGLAIVVIL).

This sequence belongs to the complex I subunit 4L family.

Its subcellular location is the mitochondrion membrane. It carries out the reaction a ubiquinone + NADH + 5 H(+)(in) = a ubiquinol + NAD(+) + 4 H(+)(out). Functionally, core subunit of the mitochondrial membrane respiratory chain NADH dehydrogenase (Complex I) that is believed to belong to the minimal assembly required for catalysis. Complex I functions in the transfer of electrons from NADH to the respiratory chain. The immediate electron acceptor for the enzyme is believed to be ubiquinone. The chain is NADH-ubiquinone oxidoreductase chain 4L (nad4L) from Dictyostelium discoideum (Social amoeba).